A 1088-amino-acid chain; its full sequence is RNA-directed RNA polymerase (1088 aa).

Residues 501-687 (LSYGDVTRFL…AKRYIAGGKI (187 aa)) enclose the RdRp catalytic domain.

It belongs to the reoviridae RNA-directed RNA polymerase family. As to quaternary structure, interacts with VP3 (Potential). Interacts with VP2; this interaction activates VP1. Interacts with NSP5; this interaction is probably necessary for the formation of functional virus factories. Interacts with NSP2; this interaction is weak. Requires Mg(2+) as cofactor.

The protein localises to the virion. It catalyses the reaction RNA(n) + a ribonucleoside 5'-triphosphate = RNA(n+1) + diphosphate. In terms of biological role, RNA-directed RNA polymerase that is involved in both transcription and genome replication. Together with VP3 capping enzyme, forms an enzyme complex positioned near the channels situated at each of the five-fold vertices of the core. Following infection, the outermost layer of the virus is lost, leaving a double-layered particle (DLP) made up of the core and VP6 shell. VP1 then catalyzes the transcription of fully conservative plus-strand genomic RNAs that are extruded through the DLP's channels into the cytoplasm where they function as mRNAs for translation of viral proteins. One copy of each of the viral (+)RNAs is also recruited during core assembly, together with newly synthesized polymerase complexes and VP2. The polymerase of these novo-formed particles catalyzes the synthesis of complementary minus-strands leading to dsRNA formation. To do so, the polymerase specifically recognizes and binds 4 bases 5'-UGUG-3' in the conserved 3'-sequence of plus-strand RNA templates. VP2 presumably activates the autoinhibited VP1-RNA complex to coordinate packaging and genome replication. Once dsRNA synthesis is complete, the polymerase switches to the transcriptional mode, thus providing secondary transcription. The protein is RNA-directed RNA polymerase of Chlorocebus pygerythrus (Vervet monkey).